The primary structure comprises 245 residues: Transcriptional regulatory protein VxrB (245 aa).

A Response regulatory domain is found at 31 to 142; that stretch reads TLLLVEDDKN…ELFARIRAQL (112 aa). Aspartate 78 is modified (4-aspartylphosphate). The ompR/PhoB-type DNA-binding region spans 151-245; it reads DSKVVTSNLT…LRGVGYKMKA (95 aa).

In terms of processing, phosphorylated by VxrA.

The protein localises to the cytoplasm. Its function is as follows. Member of the two-component regulatory system VxrB/VxrA involved in the regulation of diverses processes, including virulence, the type VI secretion system (T6SS) and biofilm formation. VxrB positively regulates the expression of the T6SS, a virulence nanomachine that directly translocates effectors into bacterial or host cells, thereby facilitating colonization by competing with sister cells and intestinal microbiota. In addition, it activates vpsL expression and biofilm formation, and represses motility. May regulate biofilm formation via its regulation of key biofilm regulators and cyclic di-GMP levels. Significantly contributes to both attack and defense via T6SS, while also influencing competition via regulation of biofilm matrix production. Is critical for colonization in the infant mouse model. The chain is Transcriptional regulatory protein VxrB from Vibrio cholerae serotype O1 (strain ATCC 39315 / El Tor Inaba N16961).